A 520-amino-acid chain; its full sequence is Sterile alpha motif domain-containing protein 3 (520 aa).

The region spanning 4–71 is the SAM domain; it reads WSVDQVCKWL…KYKQGNQELK (68 aa). Positions 67 to 104 are disordered; it reads NQELKPTGGPADTSTLTPAQAAPEHEQNPSPTSHGDQT. Polar residues predominate over residues 94–104; the sequence is NPSPTSHGDQT.

This is Sterile alpha motif domain-containing protein 3 (Samd3) from Mus musculus (Mouse).